A 309-amino-acid polypeptide reads, in one-letter code: Probable 3-hydroxyacyl-CoA dehydrogenase B0272.3 (309 aa).

It belongs to the 3-hydroxyacyl-CoA dehydrogenase family. As to quaternary structure, homodimer.

It is found in the mitochondrion matrix. The enzyme catalyses a (3S)-3-hydroxyacyl-CoA + NAD(+) = a 3-oxoacyl-CoA + NADH + H(+). The protein operates within lipid metabolism; fatty acid beta-oxidation. This is Probable 3-hydroxyacyl-CoA dehydrogenase B0272.3 from Caenorhabditis elegans.